Reading from the N-terminus, the 387-residue chain is 3-ketoacyl-CoA thiolase (387 aa).

The Acyl-thioester intermediate role is filled by Cys-91. Catalysis depends on proton acceptor residues His-343 and Cys-373.

The protein belongs to the thiolase-like superfamily. Thiolase family. In terms of assembly, heterotetramer of two alpha chains (FadB) and two beta chains (FadA).

It is found in the cytoplasm. The enzyme catalyses an acyl-CoA + acetyl-CoA = a 3-oxoacyl-CoA + CoA. Its pathway is lipid metabolism; fatty acid beta-oxidation. Functionally, catalyzes the final step of fatty acid oxidation in which acetyl-CoA is released and the CoA ester of a fatty acid two carbons shorter is formed. This Enterobacter sp. (strain 638) protein is 3-ketoacyl-CoA thiolase.